Consider the following 386-residue polypeptide: Succinate--CoA ligase [ADP-forming] subunit beta (386 aa).

The 236-residue stretch at 9 to 244 folds into the ATP-grasp domain; that stretch reads KQILKKYGAV…LNEEDPTEID (236 aa). ATP contacts are provided by residues K46, 53–55, E99, S102, and E107; that span reads GRG. Residues N199 and D213 each coordinate Mg(2+). Residues N264 and 321–323 each bind substrate; that span reads GIM.

This sequence belongs to the succinate/malate CoA ligase beta subunit family. Heterotetramer of two alpha and two beta subunits. It depends on Mg(2+) as a cofactor.

The catalysed reaction is succinate + ATP + CoA = succinyl-CoA + ADP + phosphate. It catalyses the reaction GTP + succinate + CoA = succinyl-CoA + GDP + phosphate. The protein operates within carbohydrate metabolism; tricarboxylic acid cycle; succinate from succinyl-CoA (ligase route): step 1/1. In terms of biological role, succinyl-CoA synthetase functions in the citric acid cycle (TCA), coupling the hydrolysis of succinyl-CoA to the synthesis of either ATP or GTP and thus represents the only step of substrate-level phosphorylation in the TCA. The beta subunit provides nucleotide specificity of the enzyme and binds the substrate succinate, while the binding sites for coenzyme A and phosphate are found in the alpha subunit. The protein is Succinate--CoA ligase [ADP-forming] subunit beta of Pelagibacter ubique (strain HTCC1062).